Reading from the N-terminus, the 385-residue chain is Succinate--CoA ligase [ADP-forming] subunit beta (385 aa).

Residues 9 to 237 (KEILRQFGVN…LEAEHPLEIE (229 aa)) form the ATP-grasp domain. ATP contacts are provided by residues Lys45, 52–54 (GRG), Val94, and Glu101. 2 residues coordinate Mg(2+): Asn192 and Asp206. Substrate-binding positions include Asn257 and 314 to 316 (GIT).

Belongs to the succinate/malate CoA ligase beta subunit family. As to quaternary structure, heterotetramer of two alpha and two beta subunits. It depends on Mg(2+) as a cofactor.

The catalysed reaction is succinate + ATP + CoA = succinyl-CoA + ADP + phosphate. The enzyme catalyses GTP + succinate + CoA = succinyl-CoA + GDP + phosphate. It participates in carbohydrate metabolism; tricarboxylic acid cycle; succinate from succinyl-CoA (ligase route): step 1/1. Functionally, succinyl-CoA synthetase functions in the citric acid cycle (TCA), coupling the hydrolysis of succinyl-CoA to the synthesis of either ATP or GTP and thus represents the only step of substrate-level phosphorylation in the TCA. The beta subunit provides nucleotide specificity of the enzyme and binds the substrate succinate, while the binding sites for coenzyme A and phosphate are found in the alpha subunit. The sequence is that of Succinate--CoA ligase [ADP-forming] subunit beta from Deinococcus deserti (strain DSM 17065 / CIP 109153 / LMG 22923 / VCD115).